Consider the following 172-residue polypeptide: Small ribosomal subunit protein uS5 (172 aa).

The S5 DRBM domain maps to 17-80 (FTEKLIKLNR…ERAKRSMVLF (64 aa)).

This sequence belongs to the universal ribosomal protein uS5 family. As to quaternary structure, part of the 30S ribosomal subunit. Contacts proteins S4 and S8.

Functionally, with S4 and S12 plays an important role in translational accuracy. Its function is as follows. Located at the back of the 30S subunit body where it stabilizes the conformation of the head with respect to the body. The protein is Small ribosomal subunit protein uS5 of Treponema pallidum (strain Nichols).